The chain runs to 300 residues: Protein N-terminal and lysine N-methyltransferase EFM7 (300 aa).

S-adenosyl-L-methionine contacts are provided by residues W75, 101 to 103 (GAG), D123, W156, and S179.

This sequence belongs to the class I-like SAM-binding methyltransferase superfamily. EFM7 family.

It localises to the cytoplasm. In terms of biological role, S-adenosyl-L-methionine-dependent protein methyltransferase that trimethylates the N-terminal glycine 'Gly-2' of elongation factor 1-alpha, before also catalyzing the mono- and dimethylation of 'Lys-3'. The protein is Protein N-terminal and lysine N-methyltransferase EFM7 of Cryptococcus neoformans var. neoformans serotype D (strain JEC21 / ATCC MYA-565) (Filobasidiella neoformans).